Here is a 125-residue protein sequence, read N- to C-terminus: Small ribosomal subunit protein uS13 (125 aa).

Residues 95–125 (GLPVNGQRTRTNARTRKGGKKTVANKKKVTK) form a disordered region. Basic residues predominate over residues 105–125 (TNARTRKGGKKTVANKKKVTK).

It belongs to the universal ribosomal protein uS13 family. In terms of assembly, part of the 30S ribosomal subunit. Forms a loose heterodimer with protein S19. Forms two bridges to the 50S subunit in the 70S ribosome.

In terms of biological role, located at the top of the head of the 30S subunit, it contacts several helices of the 16S rRNA. In the 70S ribosome it contacts the 23S rRNA (bridge B1a) and protein L5 of the 50S subunit (bridge B1b), connecting the 2 subunits; these bridges are implicated in subunit movement. Contacts the tRNAs in the A and P-sites. The chain is Small ribosomal subunit protein uS13 from Leptospira borgpetersenii serovar Hardjo-bovis (strain L550).